Reading from the N-terminus, the 131-residue chain is MPVTDSIADYITRIRNAGRAKNSTTDIPYSKLKENISQLLLEKGYIKNFTVITTEKFPFLRIDLKYMQSGEPAIKELTRVSKPGRRVYDGKDIKKYLGGLGLYVLSSSKGVITDKEARAQGVGGEILFRIY.

This sequence belongs to the universal ribosomal protein uS8 family. As to quaternary structure, part of the 30S ribosomal subunit. Contacts proteins S5 and S12.

One of the primary rRNA binding proteins, it binds directly to 16S rRNA central domain where it helps coordinate assembly of the platform of the 30S subunit. In Chlorobium chlorochromatii (strain CaD3), this protein is Small ribosomal subunit protein uS8.